Here is a 246-residue protein sequence, read N- to C-terminus: Triosephosphate isomerase (246 aa).

9-11 (NWK) contacts substrate. The Electrophile role is filled by H99. E168 acts as the Proton acceptor in catalysis. Substrate contacts are provided by residues G174, S207, and 228-229 (GG).

This sequence belongs to the triosephosphate isomerase family. Homodimer.

The protein localises to the cytoplasm. The catalysed reaction is D-glyceraldehyde 3-phosphate = dihydroxyacetone phosphate. It participates in carbohydrate biosynthesis; gluconeogenesis. The protein operates within carbohydrate degradation; glycolysis; D-glyceraldehyde 3-phosphate from glycerone phosphate: step 1/1. Involved in the gluconeogenesis. Catalyzes stereospecifically the conversion of dihydroxyacetone phosphate (DHAP) to D-glyceraldehyde-3-phosphate (G3P). This is Triosephosphate isomerase from Prochlorococcus marinus (strain NATL2A).